Here is a 322-residue protein sequence, read N- to C-terminus: Putative membrane-bound redox modulator Alx (322 aa).

Topologically, residues 1–6 (MNTVGT) are periplasmic. A helical transmembrane segment spans residues 7 to 27 (PLLWGGFAVVVVIMLSIDLLL). The Cytoplasmic segment spans residues 28–43 (QGRRGAHAMSMKQAAG). A helical membrane pass occupies residues 44–64 (WSILWVTLSLLFNAAFWWYLA). The Periplasmic segment spans residues 65–89 (ETQGREVADPQALAFLTGYLIEKSL). The helical transmembrane segment at 90–110 (AVDNVFVWLMLFSYFSVPPAL) threads the bilayer. At 111–113 (QRR) the chain is on the cytoplasmic side. Residues 114 to 134 (VLVYGVLGAIVLRTIMIFAGT) form a helical membrane-spanning segment. Residue Trp135 is a topological domain, periplasmic. The helical transmembrane segment at 136 to 156 (LITQFEWLLYVFGAFLLFTGV) threads the bilayer. Residues 157-198 (KMALAKEDESGIGEKPMVRWLRGHLRMTDTIENEHFFVRKNG) are Cytoplasmic-facing. The chain crosses the membrane as a helical span at residues 199 to 219 (LLYATPLLLVLIMVEFSDVIF). The Periplasmic segment spans residues 220 to 225 (AVDSIP). The helical transmembrane segment at 226–246 (AIFAVTTDPFIVLTSNLFAIL) threads the bilayer. At 247–261 (GLRAMYFLLSGVAER) the chain is on the cytoplasmic side. Residues 262-282 (FSMLKYGLAVILVFIGIKMLI) form a helical membrane-spanning segment. The Periplasmic portion of the chain corresponds to 283-286 (VDFY). Residues 287–307 (HIPIAISLGVVFGILTITLVI) form a helical membrane-spanning segment. The Cytoplasmic segment spans residues 308-321 (NTWVNHQRDKKLRA).

It belongs to the TerC family.

The protein localises to the cell inner membrane. Has been proposed to be a redox modulator. The polypeptide is Putative membrane-bound redox modulator Alx (alx) (Salmonella typhi).